Reading from the N-terminus, the 101-residue chain is NAD(P)H-quinone oxidoreductase subunit 4L, chloroplastic (101 aa).

3 consecutive transmembrane segments (helical) span residues 2-22, 32-52, and 61-81; these read MLEHVLVLSAYLFSFVLYGLI, MCLELILNAVNLNFVTFSDFF, and IFSIFVIAIAAAEAAIGLAIV.

It belongs to the complex I subunit 4L family. NDH is composed of at least 16 different subunits, 5 of which are encoded in the nucleus.

It is found in the plastid. It localises to the chloroplast thylakoid membrane. It carries out the reaction a plastoquinone + NADH + (n+1) H(+)(in) = a plastoquinol + NAD(+) + n H(+)(out). The catalysed reaction is a plastoquinone + NADPH + (n+1) H(+)(in) = a plastoquinol + NADP(+) + n H(+)(out). Its function is as follows. NDH shuttles electrons from NAD(P)H:plastoquinone, via FMN and iron-sulfur (Fe-S) centers, to quinones in the photosynthetic chain and possibly in a chloroplast respiratory chain. The immediate electron acceptor for the enzyme in this species is believed to be plastoquinone. Couples the redox reaction to proton translocation, and thus conserves the redox energy in a proton gradient. This Guizotia abyssinica (Niger) protein is NAD(P)H-quinone oxidoreductase subunit 4L, chloroplastic.